The sequence spans 662 residues: MFGKLTFDAIPYHEPIIMITYIAIILIALCIASTITYYKKWKYLWYEWFTTVDHKKISIMYGILAFVMLFRGFVDAILMRTQQVVASAGFKGFLPPHHYDQIFTAHGVIMIFFVAMPLVIGLMNLVIPLQIGARDVAFPFLNNLSFWLNVSSAVLLTLSLGIGEFAQTGWLAYPPLSGIKYSSGVGVDYWIWSLQISGVGTTLTGINFLVTILKMRAPGMSFFKMPVFTWTSLCTNILIVISFPVLTVTLVLLTLDRYFNFHFFTNDLGGNAMMYVNLIWIWGHPEVYILVLPVFGVFSEVVATFSKKRLFGYVSLVWATLSITILSFIVWLHHFFTMGAGADVNTFFGITTMIIAIPTGVKIFNWLFTIYQGRVHMHSSILWTLGFLVTFSIGGMTGVLLSVPPADFVLHNSLFLVAHFHNVIIGGVVFGCFAGINYWFPKLFGFVLNEIWGKRAFWFWIIGFFLAFIPLYFLGLMGMTRRLSQNIDSEFHMLLCIAAIGACFIGIGIICQVIQFFISIKERRHNLDLTGDPWDGRTLEWSTSSPAPLYNFAIIPKVEDRDDFWRNKEGQHYNKLINSINYHDIHMPKNTGLGFMISIFSLFFGFSAVWHITWLCILSFLAIIISLFINSLNEDTEYTISAEEIKKIEHQYWKNIQKAGLK.

Residues 1–14 (MFGKLTFDAIPYHE) lie on the Extracellular side of the membrane. Residues 15–35 (PIIMITYIAIILIALCIASTI) traverse the membrane as a helical segment. Residues 36 to 58 (TYYKKWKYLWYEWFTTVDHKKIS) are Cytoplasmic-facing. The chain crosses the membrane as a helical span at residues 59–79 (IMYGILAFVMLFRGFVDAILM). Positions 71, 75, and 98 each coordinate a ubiquinone. At 80–106 (RTQQVVASAGFKGFLPPHHYDQIFTAH) the chain is on the extracellular side. His106 contacts heme b. Residues 107–127 (GVIMIFFVAMPLVIGLMNLVI) traverse the membrane as a helical segment. The Cytoplasmic segment spans residues 128 to 145 (PLQIGARDVAFPFLNNLS). A helical membrane pass occupies residues 146-166 (FWLNVSSAVLLTLSLGIGEFA). Over 167–189 (QTGWLAYPPLSGIKYSSGVGVDY) the chain is Extracellular. Trp170 contributes to the heme b binding site. The helical transmembrane segment at 190–210 (WIWSLQISGVGTTLTGINFLV) threads the bilayer. At 211–232 (TILKMRAPGMSFFKMPVFTWTS) the chain is on the cytoplasmic side. Residues 233 to 253 (LCTNILIVISFPVLTVTLVLL) traverse the membrane as a helical segment. The Extracellular portion of the chain corresponds to 254–277 (TLDRYFNFHFFTNDLGGNAMMYVN). Residues 278 to 298 (LIWIWGHPEVYILVLPVFGVF) form a helical membrane-spanning segment. His284 is a Cu(2+) binding site. Residues 284 to 288 (HPEVY) constitute a cross-link (1'-histidyl-3'-tyrosine (His-Tyr)). Residue Tyr288 participates in Fe(II)-heme o binding. At 299 to 309 (SEVVATFSKKR) the chain is on the cytoplasmic side. Residues 310–330 (LFGYVSLVWATLSITILSFIV) form a helical membrane-spanning segment. Topologically, residues 331-346 (WLHHFFTMGAGADVNT) are extracellular. The Cu(2+) site is built by His333 and His334. The helical transmembrane segment at 347 to 367 (FFGITTMIIAIPTGVKIFNWL) threads the bilayer. At 368–380 (FTIYQGRVHMHSS) the chain is on the cytoplasmic side. Residues 381–401 (ILWTLGFLVTFSIGGMTGVLL) traverse the membrane as a helical segment. Topologically, residues 402 to 413 (SVPPADFVLHNS) are extracellular. Residues His411 and His419 each coordinate Fe(II)-heme o. Residues 414-434 (LFLVAHFHNVIIGGVVFGCFA) traverse the membrane as a helical segment. His421 provides a ligand contact to heme b. Residues 435–456 (GINYWFPKLFGFVLNEIWGKRA) lie on the Cytoplasmic side of the membrane. A helical membrane pass occupies residues 457-477 (FWFWIIGFFLAFIPLYFLGLM). Topologically, residues 478-493 (GMTRRLSQNIDSEFHM) are extracellular. Positions 481 and 482 each coordinate heme b. Residues 494 to 514 (LLCIAAIGACFIGIGIICQVI) form a helical membrane-spanning segment. Residues 515–586 (QFFISIKERR…INSINYHDIH (72 aa)) lie on the Cytoplasmic side of the membrane. A helical transmembrane segment spans residues 587 to 607 (MPKNTGLGFMISIFSLFFGFS). Ala608 is a topological domain (extracellular). Residues 609 to 629 (VWHITWLCILSFLAIIISLFI) form a helical membrane-spanning segment. Residues 630–662 (NSLNEDTEYTISAEEIKKIEHQYWKNIQKAGLK) lie on the Cytoplasmic side of the membrane.

The protein belongs to the heme-copper respiratory oxidase family. As to quaternary structure, the cytochrome bo(3) ubiquinol oxidase complex is a heterooctamer of two A chains, two B chains, two C chains and two D chains. Cu(2+) serves as cofactor. The cofactor is heme b. Fe(II)-heme o is required as a cofactor.

The protein resides in the cell membrane. It catalyses the reaction 2 a ubiquinol + O2 + n H(+)(in) = 2 a ubiquinone + 2 H2O + n H(+)(out). Functionally, cytochrome bo(3) ubiquinol oxidase is the terminal enzyme in the aerobic respiratory chain. Catalyzes the four-electron reduction of O2 to water, using a ubiquinol as a membrane soluble electron donor for molecular oxygen reduction. Has proton pump activity across the membrane in addition to electron transfer, pumping 2 protons/electron and generating a proton motive force. All the redox centers of this enzyme complex are located within the largest subunit, subunit I. Protons are probably pumped via D- and K- channels found in this subunit. This Buchnera aphidicola subsp. Acyrthosiphon pisum (strain APS) (Acyrthosiphon pisum symbiotic bacterium) protein is Cytochrome bo(3) ubiquinol oxidase subunit 1 (cyoB).